The chain runs to 287 residues: Movement protein (287 aa).

Belongs to the nucleorhabdovirus type-1 movement protein family.

Transports viral genome to neighboring plant cells directly through plasmosdesmata, without any budding. The movement protein allows efficient cell to cell propagation, by bypassing the host cell wall barrier. This Colocasia esculenta (Wild taro) protein is Movement protein (3).